The primary structure comprises 256 residues: ATP synthase subunit a (256 aa).

Positions 1–8 (MYQFNFIL) are cleaved as a propeptide — removed in mature form. Helical transmembrane passes span 34-54 (ITNI…YHLL), 92-112 (YFPF…IGMV), 121-141 (HFIL…FLGL), 148-168 (FFSL…LVLI), 186-206 (ANIL…YNIM), 209-229 (GILF…FSGL), and 230-250 (ELAI…SYIK).

The protein belongs to the ATPase A chain family. F-type ATPases have 2 components, CF(1) - the catalytic core - and CF(0) - the membrane proton channel. CF(1) has five subunits: alpha(3), beta(3), gamma(1), delta(1), epsilon(1). CF(0) has three main subunits: a, b and c.

The protein localises to the mitochondrion inner membrane. Its function is as follows. Mitochondrial membrane ATP synthase (F(1)F(0) ATP synthase or Complex V) produces ATP from ADP in the presence of a proton gradient across the membrane which is generated by electron transport complexes of the respiratory chain. F-type ATPases consist of two structural domains, F(1) - containing the extramembraneous catalytic core and F(0) - containing the membrane proton channel, linked together by a central stalk and a peripheral stalk. During catalysis, ATP synthesis in the catalytic domain of F(1) is coupled via a rotary mechanism of the central stalk subunits to proton translocation. Key component of the proton channel; it may play a direct role in the translocation of protons across the membrane. The chain is ATP synthase subunit a (atp6) from Emericella nidulans (Aspergillus nidulans).